The sequence spans 218 residues: Large ribosomal subunit protein uL3 (218 aa).

This sequence belongs to the universal ribosomal protein uL3 family. In terms of assembly, part of the 50S ribosomal subunit. Forms a cluster with proteins L14 and L19.

Its function is as follows. One of the primary rRNA binding proteins, it binds directly near the 3'-end of the 23S rRNA, where it nucleates assembly of the 50S subunit. The polypeptide is Large ribosomal subunit protein uL3 (Mycolicibacterium gilvum (strain PYR-GCK) (Mycobacterium gilvum (strain PYR-GCK))).